Reading from the N-terminus, the 119-residue chain is Ribonuclease P protein component (119 aa).

This sequence belongs to the RnpA family. Consists of a catalytic RNA component (M1 or rnpB) and a protein subunit.

It catalyses the reaction Endonucleolytic cleavage of RNA, removing 5'-extranucleotides from tRNA precursor.. RNaseP catalyzes the removal of the 5'-leader sequence from pre-tRNA to produce the mature 5'-terminus. It can also cleave other RNA substrates such as 4.5S RNA. The protein component plays an auxiliary but essential role in vivo by binding to the 5'-leader sequence and broadening the substrate specificity of the ribozyme. This chain is Ribonuclease P protein component, found in Histophilus somni (strain 129Pt) (Haemophilus somnus).